Here is a 459-residue protein sequence, read N- to C-terminus: MSDFDKLTPKQIVEELDKYIVGQSKAKKAVAIAIRNRIRRQKLSEEWKKEITPKNILMIGPTGVGKTEIARRLAQLSGSPFLKIEATRFTEVGYVGKNVDSMIRELVEIAVNMVKQQKMKEVEEKAKLNVEERILDALVPMKKKTQIPFANIFGMQMEKPQQTDDYSENLRKREELRRRLRSGELDNEEIEIEIETSNSPIGFIGLPEMEDIGMDLSNVIGNIFPKQKKRRKMKISEAKKVLLPIEEEKLIDMDETIQTALELAQNRGIIFIDEMDKIAAKTGSSGQDVSRQGVQRDLLPIVEGTTITTKYGPVKTDYILFIAAGAFHVSKPSDLIPELQGRFPIRVELEPLKEEDFVRILVEPENALTKQYQALLYTENVQLEFTDDGIKELARVSYKLNQKLENIGARRLYTVLEKVLEDVLFEAPEIEEKIIVDADYVTKKLKGIIEDEDLTSYIL.

ATP contacts are provided by residues V21, 63–68 (GVGKTE), D273, E338, and R410.

This sequence belongs to the ClpX chaperone family. HslU subfamily. As to quaternary structure, a double ring-shaped homohexamer of HslV is capped on each side by a ring-shaped HslU homohexamer. The assembly of the HslU/HslV complex is dependent on binding of ATP.

It is found in the cytoplasm. Functionally, ATPase subunit of a proteasome-like degradation complex; this subunit has chaperone activity. The binding of ATP and its subsequent hydrolysis by HslU are essential for unfolding of protein substrates subsequently hydrolyzed by HslV. HslU recognizes the N-terminal part of its protein substrates and unfolds these before they are guided to HslV for hydrolysis. This chain is ATP-dependent protease ATPase subunit HslU, found in Thermosipho africanus (strain TCF52B).